The primary structure comprises 263 residues: uncharacterized protein (263 aa).

31-38 (GPTGSGKT) contacts ATP.

Belongs to the CbbQ/NirQ/NorQ/GpvN family.

This is an uncharacterized protein from Staphylococcus aureus (strain bovine RF122 / ET3-1).